The following is a 243-amino-acid chain: 3-deoxy-manno-octulosonate cytidylyltransferase (243 aa).

The protein belongs to the KdsB family.

The protein localises to the cytoplasm. It carries out the reaction 3-deoxy-alpha-D-manno-oct-2-ulosonate + CTP = CMP-3-deoxy-beta-D-manno-octulosonate + diphosphate. Its pathway is nucleotide-sugar biosynthesis; CMP-3-deoxy-D-manno-octulosonate biosynthesis; CMP-3-deoxy-D-manno-octulosonate from 3-deoxy-D-manno-octulosonate and CTP: step 1/1. It functions in the pathway bacterial outer membrane biogenesis; lipopolysaccharide biosynthesis. In terms of biological role, activates KDO (a required 8-carbon sugar) for incorporation into bacterial lipopolysaccharide in Gram-negative bacteria. The chain is 3-deoxy-manno-octulosonate cytidylyltransferase from Bartonella quintana (strain Toulouse) (Rochalimaea quintana).